Consider the following 190-residue polypeptide: Large ribosomal subunit protein uL10 (190 aa).

This sequence belongs to the universal ribosomal protein uL10 family. Part of the ribosomal stalk of the 50S ribosomal subunit. The N-terminus interacts with L11 and the large rRNA to form the base of the stalk. The C-terminus forms an elongated spine to which L12 dimers bind in a sequential fashion forming a multimeric L10(L12)X complex.

Functionally, forms part of the ribosomal stalk, playing a central role in the interaction of the ribosome with GTP-bound translation factors. The chain is Large ribosomal subunit protein uL10 from Trichodesmium erythraeum (strain IMS101).